A 198-amino-acid polypeptide reads, in one-letter code: Recombination protein RecR (198 aa).

The C4-type zinc finger occupies 56–71; it reads CTECRDFSETKICAIC. Positions 79-174 constitute a Toprim domain; the sequence is HQLCVVESPP…RPSRLAQGLP (96 aa).

Belongs to the RecR family.

Its function is as follows. May play a role in DNA repair. It seems to be involved in an RecBC-independent recombinational process of DNA repair. It may act with RecF and RecO. This Xylella fastidiosa (strain 9a5c) protein is Recombination protein RecR.